We begin with the raw amino-acid sequence, 487 residues long: ATP-dependent 6-phosphofructokinase (487 aa).

Residues Gly-107, 173–174 (RG), 198–201 (GDGT), and Lys-226 contribute to the ATP site. Position 199 (Asp-199) interacts with Mg(2+). Residues 227 to 229 (TID), 272 to 274 (MGR), and Glu-325 contribute to the substrate site. Catalysis depends on Asp-229, which acts as the Proton acceptor. 341 to 343 (SGN) is a binding site for ATP. 380 to 383 (YMIR) is a substrate binding site. Positions 485 to 487 (AKL) match the Peroxisomal targeting signal motif.

Belongs to the phosphofructokinase type A (PFKA) family. PPi-dependent PFK group II subfamily. Atypical ATP-dependent clade 'X' sub-subfamily. In terms of assembly, homotetramer. Requires Mg(2+) as cofactor.

Its subcellular location is the glycosome. It catalyses the reaction beta-D-fructose 6-phosphate + ATP = beta-D-fructose 1,6-bisphosphate + ADP + H(+). It participates in carbohydrate degradation; glycolysis; D-glyceraldehyde 3-phosphate and glycerone phosphate from D-glucose: step 3/4. Allosterically activated by AMP. Catalyzes the phosphorylation of D-fructose 6-phosphate to fructose 1,6-bisphosphate by ATP, the first committing step of glycolysis. In Trypanosoma brucei brucei, this protein is ATP-dependent 6-phosphofructokinase.